The chain runs to 343 residues: Small ribosomal subunit biogenesis GTPase RsgA (343 aa).

One can recognise a CP-type G domain in the interval 116-275 (RGQLKPVAAN…LIDSPGIREF (160 aa)). Residues 163-166 (NKAD) and 217-225 (GQSGVGKSS) contribute to the GTP site. Zn(2+) is bound by residues Cys299, Cys304, His306, and Cys312.

This sequence belongs to the TRAFAC class YlqF/YawG GTPase family. RsgA subfamily. In terms of assembly, monomer. Associates with 30S ribosomal subunit, binds 16S rRNA. Zn(2+) serves as cofactor.

The protein localises to the cytoplasm. In terms of biological role, one of several proteins that assist in the late maturation steps of the functional core of the 30S ribosomal subunit. Helps release RbfA from mature subunits. May play a role in the assembly of ribosomal proteins into the subunit. Circularly permuted GTPase that catalyzes slow GTP hydrolysis, GTPase activity is stimulated by the 30S ribosomal subunit. This is Small ribosomal subunit biogenesis GTPase RsgA from Ectopseudomonas mendocina (strain ymp) (Pseudomonas mendocina).